The primary structure comprises 217 residues: Putative thymidylate synthase (217 aa).

The active site involves cysteine 139.

It belongs to the thymidylate synthase family. Archaeal-type ThyA subfamily. In terms of assembly, monomer.

It is found in the cytoplasm. The protein operates within pyrimidine metabolism; dTTP biosynthesis. May catalyze the biosynthesis of dTMP using an unknown cosubstrate. This Methanosarcina mazei (strain ATCC BAA-159 / DSM 3647 / Goe1 / Go1 / JCM 11833 / OCM 88) (Methanosarcina frisia) protein is Putative thymidylate synthase.